Here is a 501-residue protein sequence, read N- to C-terminus: Aldehyde dehydrogenase 1A1 (501 aa).

Serine 2 bears the N-acetylserine mark. N6-acetyllysine is present on residues lysine 91 and lysine 128. Residues isoleucine 167–asparagine 170, lysine 193–glutamate 196, glycine 226–proline 227, and glycine 246–serine 247 contribute to the NAD(+) site. Lysine 252 is subject to N6-acetyllysine. The active-site Proton acceptor is glutamate 269. Residue glutamate 269–glycine 271 participates in NAD(+) binding. Cysteine 303 (nucleophile) is an active-site residue. A mediates interaction with PRMT3 region spans residues leucine 336–serine 501. Threonine 337 is subject to Phosphothreonine. Residue glutamate 349–lysine 353 participates in NAD(+) binding. An N6-acetyllysine mark is found at lysine 353 and lysine 367. Glutamate 400 to phenylalanine 402 is a binding site for NAD(+). An N6-acetyllysine modification is found at lysine 410. Serine 413 carries the post-translational modification Phosphoserine. N6-acetyllysine occurs at positions 419 and 495.

Belongs to the aldehyde dehydrogenase family. As to quaternary structure, homotetramer. Interacts with PRMT3; the interaction is direct, inhibits ALDH1A1 aldehyde dehydrogenase activity and is independent of the methyltransferase activity of PRMT3. In terms of processing, the N-terminus is blocked most probably by acetylation. In terms of tissue distribution, expressed in muscle, liver, small intestine, kidney, brain, lung, heart but not detected in erythrocytes (at protein level).

It is found in the cytoplasm. Its subcellular location is the cytosol. It localises to the cell projection. The protein resides in the axon. The enzyme catalyses an aldehyde + NAD(+) + H2O = a carboxylate + NADH + 2 H(+). The catalysed reaction is all-trans-retinal + NAD(+) + H2O = all-trans-retinoate + NADH + 2 H(+). It carries out the reaction 9-cis-retinal + NAD(+) + H2O = 9-cis-retinoate + NADH + 2 H(+). It catalyses the reaction 11-cis-retinal + NAD(+) + H2O = 11-cis-retinoate + NADH + 2 H(+). The enzyme catalyses 13-cis-retinal + NAD(+) + H2O = 13-cis-retinoate + NADH + 2 H(+). The catalysed reaction is 3-deoxyglucosone + NAD(+) + H2O = 2-dehydro-3-deoxy-D-gluconate + NADH + 2 H(+). It carries out the reaction (E)-4-hydroxynon-2-enal + NAD(+) + H2O = (E)-4-hydroxynon-2-enoate + NADH + 2 H(+). It catalyses the reaction malonaldehyde + NAD(+) + H2O = 3-oxopropanoate + NADH + 2 H(+). The enzyme catalyses hexanal + NAD(+) + H2O = hexanoate + NADH + 2 H(+). The catalysed reaction is propanal + NAD(+) + H2O = propanoate + NADH + 2 H(+). It carries out the reaction acetaldehyde + NAD(+) + H2O = acetate + NADH + 2 H(+). It catalyses the reaction benzaldehyde + NAD(+) + H2O = benzoate + NADH + 2 H(+). The enzyme catalyses 4-aminobutanal + NAD(+) + H2O = 4-aminobutanoate + NADH + 2 H(+). It functions in the pathway cofactor metabolism; retinol metabolism. Cytosolic dehydrogenase that catalyzes the irreversible oxidation of a wide range of aldehydes to their corresponding carboxylic acid. Functions downstream of retinol dehydrogenases and catalyzes the oxidation of retinaldehyde into retinoic acid, the second step in the oxidation of retinol/vitamin A into retinoic acid. This pathway is crucial to control the levels of retinol and retinoic acid, two important molecules which excess can be teratogenic and cytotoxic. Also oxidizes aldehydes resulting from lipid peroxidation like (E)-4-hydroxynon-2-enal/HNE, malonaldehyde and hexanal that form protein adducts and are highly cytotoxic. By participating for instance to the clearance of (E)-4-hydroxynon-2-enal/HNE in the lens epithelium prevents the formation of HNE-protein adducts and lens opacification. Also functions downstream of fructosamine-3-kinase in the fructosamine degradation pathway by catalyzing the oxidation of 3-deoxyglucosone, the carbohydrate product of fructosamine 3-phosphate decomposition, which is itself a potent glycating agent that may react with lysine and arginine side-chains of proteins. Also has an aminobutyraldehyde dehydrogenase activity and is probably part of an alternative pathway for the biosynthesis of GABA/4-aminobutanoate in midbrain, thereby playing a role in GABAergic synaptic transmission. This is Aldehyde dehydrogenase 1A1 from Bos taurus (Bovine).